The chain runs to 732 residues: Phosphoribosylformylglycinamidine synthase subunit PurL (732 aa).

His-42 is a catalytic residue. ATP contacts are provided by Tyr-45 and Lys-84. Position 86 (Glu-86) interacts with Mg(2+). Residues Ser-87–His-90 and Arg-109 contribute to the substrate site. His-88 (proton acceptor) is an active-site residue. Mg(2+) is bound at residue Asp-110. Gln-238 lines the substrate pocket. A Mg(2+)-binding site is contributed by Asp-266. Glu-310–Gln-312 contributes to the substrate binding site. 2 residues coordinate ATP: Asp-496 and Gly-533. Mg(2+) is bound at residue Asn-534. Ser-536 contacts substrate.

The protein belongs to the FGAMS family. In terms of assembly, monomer. Part of the FGAM synthase complex composed of 1 PurL, 1 PurQ and 2 PurS subunits.

It localises to the cytoplasm. It catalyses the reaction N(2)-formyl-N(1)-(5-phospho-beta-D-ribosyl)glycinamide + L-glutamine + ATP + H2O = 2-formamido-N(1)-(5-O-phospho-beta-D-ribosyl)acetamidine + L-glutamate + ADP + phosphate + H(+). Its pathway is purine metabolism; IMP biosynthesis via de novo pathway; 5-amino-1-(5-phospho-D-ribosyl)imidazole from N(2)-formyl-N(1)-(5-phospho-D-ribosyl)glycinamide: step 1/2. Functionally, part of the phosphoribosylformylglycinamidine synthase complex involved in the purines biosynthetic pathway. Catalyzes the ATP-dependent conversion of formylglycinamide ribonucleotide (FGAR) and glutamine to yield formylglycinamidine ribonucleotide (FGAM) and glutamate. The FGAM synthase complex is composed of three subunits. PurQ produces an ammonia molecule by converting glutamine to glutamate. PurL transfers the ammonia molecule to FGAR to form FGAM in an ATP-dependent manner. PurS interacts with PurQ and PurL and is thought to assist in the transfer of the ammonia molecule from PurQ to PurL. This is Phosphoribosylformylglycinamidine synthase subunit PurL from Campylobacter hominis (strain ATCC BAA-381 / DSM 21671 / CCUG 45161 / LMG 19568 / NCTC 13146 / CH001A).